A 336-amino-acid chain; its full sequence is Glycerol-3-phosphate dehydrogenase [NAD(P)+] (336 aa).

Residues serine 16, tyrosine 17, histidine 37, and lysine 111 each contribute to the NADPH site. Residues lysine 111, glycine 140, and threonine 142 each contribute to the sn-glycerol 3-phosphate site. NADPH is bound at residue alanine 144. Sn-glycerol 3-phosphate contacts are provided by lysine 196, aspartate 249, serine 259, arginine 260, and asparagine 261. The Proton acceptor role is filled by lysine 196. Arginine 260 provides a ligand contact to NADPH. NADPH contacts are provided by valine 284 and glutamate 286.

The protein belongs to the NAD-dependent glycerol-3-phosphate dehydrogenase family.

Its subcellular location is the cytoplasm. It catalyses the reaction sn-glycerol 3-phosphate + NAD(+) = dihydroxyacetone phosphate + NADH + H(+). The enzyme catalyses sn-glycerol 3-phosphate + NADP(+) = dihydroxyacetone phosphate + NADPH + H(+). Its pathway is membrane lipid metabolism; glycerophospholipid metabolism. Its function is as follows. Catalyzes the reduction of the glycolytic intermediate dihydroxyacetone phosphate (DHAP) to sn-glycerol 3-phosphate (G3P), the key precursor for phospholipid synthesis. This Actinobacillus pleuropneumoniae serotype 5b (strain L20) protein is Glycerol-3-phosphate dehydrogenase [NAD(P)+].